A 604-amino-acid polypeptide reads, in one-letter code: Serine/threonine-protein kinase A-Raf (604 aa).

The 73-residue stretch at 19–91 (GTVKVYLPNK…DGEELIVEVL (73 aa)) folds into the RBD domain. The Phorbol-ester/DAG-type zinc finger occupies 98 to 144 (MHNFVRKTFFSLAFCDFCLKFLFHGFRCQTCGYKFHQHCSSKVPTVC). 8 residues coordinate Zn(2+): His-99, Cys-112, Cys-115, Cys-125, Cys-128, His-133, Cys-136, and Cys-144. Phosphoserine is present on residues Ser-157 and Ser-162. Disordered stretches follow at residues 177–222 (NELL…HMVS) and 241–288 (TDAA…EKKK). Phosphothreonine is present on Thr-181. Ser-186 bears the Phosphoserine mark. Residues 210–222 (IRSTSTPNVHMVS) show a composition bias toward polar residues. A compositionally biased stretch (low complexity) spans 252–265 (PRGSPSPASVSSGR). Phosphoserine occurs at positions 255 and 267. The segment covering 272–287 (LPSEQRERKSLADEKK) has biased composition (basic and acidic residues). In terms of domain architecture, Protein kinase spans 308–568 (VQLLKRIGTG…PQILATIELL (261 aa)). Residues 314 to 322 (IGTGSFGTV) and Lys-334 contribute to the ATP site. Phosphothreonine is present on Thr-316. The active-site Proton acceptor is the Asp-427.

The protein belongs to the protein kinase superfamily. TKL Ser/Thr protein kinase family. RAF subfamily. Interacts with TH1L/NELFD. It depends on Zn(2+) as a cofactor. In terms of processing, dephosphorylation by the SHOC2-MRAS-PP1c (SMP) complex consisting of SHOC2, GTP-bound M-Ras/MRAS and the catalytic subunit of protein phosphatase 1 (PPP1CA, PPP1CB or PPP1CC); this relieves inactivation and stimulates kinase activity.

The enzyme catalyses L-seryl-[protein] + ATP = O-phospho-L-seryl-[protein] + ADP + H(+). It carries out the reaction L-threonyl-[protein] + ATP = O-phospho-L-threonyl-[protein] + ADP + H(+). Its function is as follows. Involved in the transduction of mitogenic signals from the cell membrane to the nucleus. May also regulate the TOR signaling cascade. Phosphorylates PFKFB2. The polypeptide is Serine/threonine-protein kinase A-Raf (Araf) (Mus musculus (Mouse)).